A 414-amino-acid chain; its full sequence is Cell division protein FtsA (414 aa).

The protein belongs to the FtsA/MreB family. As to quaternary structure, self-interacts. Interacts with FtsZ.

It localises to the cell inner membrane. In terms of biological role, cell division protein that is involved in the assembly of the Z ring. May serve as a membrane anchor for the Z ring. This Neisseria meningitidis serogroup B (strain ATCC BAA-335 / MC58) protein is Cell division protein FtsA.